The sequence spans 933 residues: Progesterone receptor (933 aa).

The disordered stretch occupies residues 1-157 (MTELKAKGPR…PEDPPAAPAT (157 aa)). The interval 1–164 (MTELKAKGPR…PATQRVLSPL (164 aa)) is AF3; mediates transcriptional activation (in isoform B). Residues 1–566 (MTELKAKGPR…YSFESLPQKI (566 aa)) form a modulating, Pro-Rich region. Residue Lys-7 forms a Glycyl lysine isopeptide (Lys-Gly) (interchain with G-Cter in SUMO) linkage. A Phosphoserine modification is found at Ser-20. An LXXL motif 1 motif is present at residues 55 to 59 (LDGLL). 2 positions are modified to phosphoserine: Ser-81 and Ser-102. Positions 115 to 119 (LDTLL) match the LXXL motif 2 motif. 2 positions are modified to phosphoserine: Ser-130 and Ser-162. The tract at residues 165–305 (MSRSGCKVGD…LATTVMDFIH (141 aa)) is mediates transcriptional transrepression (in isoform A). Positions 183 to 187 (KVLPR) match the Nuclear localization signal motif. Phosphoserine occurs at positions 190 and 213. Residues 195–241 (LLLPASESPHWSGAPVKPSPQAAAVEVEEEDGSESEESAGPLLKGKP) form a disordered region. The segment covering 220–231 (EVEEEDGSESEE) has biased composition (acidic residues). Positions 232 to 241 (SAGPLLKGKP) are enriched in low complexity. Ser-294 is modified (phosphoserine; by MAPK1). The tract at residues 331 to 351 (GGAGAASAFAPPRSSPCASST) is disordered. Positions 335–350 (AASAFAPPRSSPCASS) are enriched in low complexity. Ser-345 carries the phosphoserine; by MAPK modification. A Glycyl lysine isopeptide (Lys-Gly) (interchain with G-Cter in SUMO); alternate cross-link involves residue Lys-388. Residue Lys-388 forms a Glycyl lysine isopeptide (Lys-Gly) (interchain with G-Cter in ubiquitin); alternate linkage. Position 400 is a phosphoserine; by CDK2 (Ser-400). Residues 415-452 (PDFPLGPPPPLPPRATPSRPGEAAVTAAPASASVSSAS) form a disordered region. The span at 418–429 (PLGPPPPLPPRA) shows a compositional bias: pro residues. Over residues 430-452 (TPSRPGEAAVTAAPASASVSSAS) the composition is skewed to low complexity. The tract at residues 456-546 (STLECILYKA…VYPPYLNYLR (91 aa)) is AF1; mediates transcriptional activation. Lys-531 participates in a covalent cross-link: Glycyl lysine isopeptide (Lys-Gly) (interchain with G-Cter in SUMO). 2 NR C4-type zinc fingers span residues 567–587 (CLIC…CGSC) and 603–627 (CAGR…LRKC). Positions 567–639 (CLICGDEASG…AGMVLGGRKF (73 aa)) form a DNA-binding region, nuclear receptor. Residue Ser-676 is modified to Phosphoserine. An NR LBD domain is found at 679–913 (QDIQLIPPLI…EFPEMMSEVI (235 aa)). The segment at 687–933 (LINLLMSIEP…MVKPLLFHKK (247 aa)) is AF2; mediates transcriptional activation. Arg-766 contacts progesterone.

This sequence belongs to the nuclear hormone receptor family. NR3 subfamily. In terms of assembly, interacts with SMARD1 and UNC45A. Interacts with CUEDC2; the interaction promotes ubiquitination, decreases sumoylation, and represses transcriptional activity. Interacts with PIAS3; the interaction promotes sumoylation of PR in a hormone-dependent manner, inhibits DNA-binding, and alters nuclear export. Interacts with SP1; the interaction requires ligand-induced phosphorylation on Ser-345 by ERK1/2 MAPK. Interacts with PRMT2. Isoform A interacts with NCOR2. Isoform B (but not isoform A) interacts with NCOA2 and NCOA1. Isoform B (but not isoform A) interacts with KLF9. Interacts with GTF2B. Phosphorylated on multiple serine sites. Several of these sites are hormone-dependent. Phosphorylation on Ser-294 occurs preferentially on isoform B, is highly hormone-dependent and modulates ubiquitination and sumoylation on Lys-388. Phosphorylation on Ser-102 and Ser-345 also requires induction by hormone. Basal phosphorylation on Ser-81, Ser-162, Ser-190 and Ser-400 is increased in response to progesterone and can be phosphorylated in vitro by the CDK2-A1 complex. Increased levels of phosphorylation on Ser-400 also in the presence of EGF, heregulin, IGF, PMA and FBS. Phosphorylation at this site by CDK2 is ligand-independent, and increases nuclear translocation and transcriptional activity. Phosphorylation at Ser-162 and Ser-294, but not at Ser-190, is impaired during the G(2)/M phase of the cell cycle. Phosphorylation on Ser-345 by ERK1/2 MAPK is required for interaction with SP1. Post-translationally, sumoylation is hormone-dependent and represses transcriptional activity. Sumoylation on all three sites is enhanced by PIAS3. Desumoylated by SENP1. Sumoylation on Lys-388, the main site of sumoylation, is repressed by ubiquitination on the same site, and modulated by phosphorylation at Ser-294. In terms of processing, ubiquitination is hormone-dependent and represses sumoylation on the same site. Promoted by MAPK-mediated phosphorylation on Ser-294. Ubiquitinated by UBR5, leading to its degradation: UBR5 specifically recognizes and binds ligand-bound PGR when it is not associated with coactivators (NCOAs). In presence of NCOAs, the UBR5-degron is not accessible, preventing its ubiquitination and degradation. Palmitoylated by ZDHHC7 and ZDHHC21. Palmitoylation is required for plasma membrane targeting and for rapid intracellular signaling via ERK and AKT kinases and cAMP generation. In reproductive tissues the expression of isoform A and isoform B varies as a consequence of developmental and hormonal status. Isoform A and isoform B are expressed in comparable levels in uterine glandular epithelium during the proliferative phase of the menstrual cycle. Expression of isoform B but not of isoform A persists in the glands during mid-secretory phase. In the stroma, isoform A is the predominant form throughout the cycle. Heterogeneous isoform expression between the glands of the endometrium basalis and functionalis is implying region-specific responses to hormonal stimuli.

The protein localises to the nucleus. It localises to the cytoplasm. It is found in the mitochondrion outer membrane. The steroid hormones and their receptors are involved in the regulation of eukaryotic gene expression and affect cellular proliferation and differentiation in target tissues. Depending on the isoform, progesterone receptor functions as a transcriptional activator or repressor. In terms of biological role, ligand-dependent transdominant repressor of steroid hormone receptor transcriptional activity including repression of its isoform B, MR and ER. Transrepressional activity may involve recruitment of corepressor NCOR2. Its function is as follows. Transcriptional activator of several progesteron-dependent promoters in a variety of cell types. Involved in activation of SRC-dependent MAPK signaling on hormone stimulation. Functionally, increases mitochondrial membrane potential and cellular respiration upon stimulation by progesterone. This is Progesterone receptor (PGR) from Homo sapiens (Human).